Consider the following 169-residue polypeptide: Probable prefoldin subunit 3 (169 aa).

The protein belongs to the prefoldin subunit alpha family. In terms of assembly, heterohexamer of two PFD-alpha type and four PFD-beta type subunits.

In terms of biological role, binds specifically to cytosolic chaperonin (c-CPN) and transfers target proteins to it. Binds to nascent polypeptide chain and promotes folding in an environment in which there are many competing pathways for nonnative proteins. The protein is Probable prefoldin subunit 3 of Schizosaccharomyces pombe (strain 972 / ATCC 24843) (Fission yeast).